The sequence spans 145 residues: Large ribosomal subunit protein cL37 (145 aa).

Residues 1 to 63 constitute a chloroplast transit peptide; that stretch reads MALLCFNSFT…PRKNSIFIAS (63 aa). The interval 125–145 is disordered; it reads KRRLRKKGNWPPSKMKKLEGV.

Belongs to the chloroplast-specific ribosomal protein cL37 family. In terms of assembly, part of the 50S ribosomal subunit.

Its subcellular location is the plastid. The protein localises to the chloroplast. This Pisum sativum (Garden pea) protein is Large ribosomal subunit protein cL37 (PSRP5).